The sequence spans 223 residues: Glycolipid transfer protein 2 (223 aa).

A ganglioside GM3 (d18:1(4E))-binding residues include Asp-69, Asn-73, Trp-116, and His-155.

The protein belongs to the GLTP family.

Functionally, transfers glycolipids in vitro. The polypeptide is Glycolipid transfer protein 2 (Arabidopsis thaliana (Mouse-ear cress)).